The sequence spans 143 residues: Protein Wnt-1 (143 aa).

Serine 1 is lipidated: O-palmitoleoyl serine; by PORCN. The tract at residues 38 to 81 is disordered; sequence EGVRGNSNRGDRGDRRDRGDRSDNGGTEANFQPYNSNHKPPGPR. A compositionally biased stretch (basic and acidic residues) spans 46-60; the sequence is RGDRGDRRDRGDRSD. Residues 64–75 show a composition bias toward polar residues; that stretch reads TEANFQPYNSNH. Cysteine 109 and cysteine 124 are joined by a disulfide. Asparagine 110 and asparagine 111 each carry an N-linked (GlcNAc...) asparagine glycan.

It belongs to the Wnt family. Palmitoleoylation is required for efficient binding to frizzled receptors. Palmitoleoylation is necessary for proper trafficking to cell surface. Depalmitoleoylated by NOTUM, leading to inhibit Wnt signaling pathway.

It localises to the secreted. The protein resides in the extracellular space. The protein localises to the extracellular matrix. Functionally, ligand for members of the frizzled family of seven transmembrane receptors. Probable developmental protein. This Evasterias troschelii (Mottled sea star) protein is Protein Wnt-1 (WNT-1).